The primary structure comprises 933 residues: MKLKETLNLGKTAFPMRAGLPNKEPQWQAAWEEADLYTKRQELNAGKPAFHLHDGPPYANGNIHVGHALNKISKDIIVRSKSMSGFHVPYVPGWDTHGLPIEQVLAKQGVKRKEMDLADYLDMCRQYALSQVDKQRDDFKRLGVSADWENPYVTLDPQFEADQIRVFGAMADKGYIYRGAKPVYWSWSSESALAEAEIEYHDIDSTSLYYANKVKDGKGILDTNTYIVVWTTTPFTVTASRGLTVGPDMDYLVVKPAGSDRQYVVAEGLLDSLAGKFGWESFETLASHKGADLEYIVTEHPWDTDVEELVILGDHVTLESGTGIVHTAPGFGEDDYNVGTKYKLEVAVTVDERGLMMENAGPDFHGQFYDKVTPIVIDKLGDLLLAQEVINHSYPFDWRTKKPIIWRAVPQWFASVSDFRQDILDEIEKTTFHPSWGKTRLYNMIRDRGDWVISRQRAWGVPLPIFYAEDGTAIMTKEVTDHVANLFQENGSIIWWQKEAKDLLPEGFTHPGSPNGEFTKETDIMDVWFDSGSSWNGVMNARDNLSYPADLYLEGSDQYRGWFNSSLITSVAVNGHAPYKAILSQGFVLDGKGEKMSKSKGNIISPNDVAKQYGADILRLWVASVDTDNDVRVSMEILGQVSETYRKIRNTLRFLIANTSDFNPATDTVAYADLGAVDKYMTIVFNQLVATINDAYERYDFMTIYKAVVNFVTVDLSAFYLDFAKDVVYIEAANSLERRRMQTVFYDILVKITKLLTPILPHTTEEIWSYLEHESEAFVQLAEMPAAETFSAQEDILEAWSAFMTLRTQAQKALEEARNAKVIGKSLEAHLTIYASEEVKTLLTALDSDIALLLIVSQLTIADLADAPADAVAFEGVAFTVEHAVGEVCERSRRIDPTTRMRSYNAFVCDHSAKIIEENFPEAVAEGFEESGK.

The 'HIGH' region signature appears at 57-67 (PYANGNIHVGH). Glu554 lines the L-isoleucyl-5'-AMP pocket. A 'KMSKS' region motif is present at residues 595 to 599 (KMSKS). Position 598 (Lys598) interacts with ATP.

This sequence belongs to the class-I aminoacyl-tRNA synthetase family. IleS type 1 subfamily. Monomer.

It is found in the cytoplasm. It catalyses the reaction tRNA(Ile) + L-isoleucine + ATP = L-isoleucyl-tRNA(Ile) + AMP + diphosphate. Catalyzes the attachment of isoleucine to tRNA(Ile). As IleRS can inadvertently accommodate and process structurally similar amino acids such as valine, to avoid such errors it has two additional distinct tRNA(Ile)-dependent editing activities. One activity is designated as 'pretransfer' editing and involves the hydrolysis of activated Val-AMP. The other activity is designated 'posttransfer' editing and involves deacylation of mischarged Val-tRNA(Ile). The sequence is that of Isoleucine--tRNA ligase from Streptococcus pyogenes serotype M3 (strain ATCC BAA-595 / MGAS315).